Reading from the N-terminus, the 362-residue chain is Ferrochelatase (362 aa).

Residues His-228 and Glu-309 each coordinate Fe cation.

This sequence belongs to the ferrochelatase family.

It localises to the cytoplasm. The enzyme catalyses heme b + 2 H(+) = protoporphyrin IX + Fe(2+). It functions in the pathway porphyrin-containing compound metabolism; protoheme biosynthesis; protoheme from protoporphyrin-IX: step 1/1. Functionally, catalyzes the ferrous insertion into protoporphyrin IX. The protein is Ferrochelatase of Bordetella pertussis (strain Tohama I / ATCC BAA-589 / NCTC 13251).